The chain runs to 382 residues: Lipoyl synthase, mitochondrial (382 aa).

Residues 1–30 constitute a mitochondrion transit peptide; it reads MHGRRHLAASLARALTYAPSRSISSTPSLL. The segment covering 25–34 has biased composition (polar residues); the sequence is STPSLLQTLD. The disordered stretch occupies residues 25–47; it reads STPSLLQTLDPSTPSPAAAPPTA. Residues Cys112, Cys117, Cys123, Cys143, Cys147, Cys150, and Ser359 each contribute to the [4Fe-4S] cluster site. A Radical SAM core domain is found at 128 to 348; that stretch reads ETGTATATIM…RSLGVDMGFR (221 aa).

The protein belongs to the radical SAM superfamily. Lipoyl synthase family. [4Fe-4S] cluster serves as cofactor.

The protein localises to the mitochondrion. It catalyses the reaction [[Fe-S] cluster scaffold protein carrying a second [4Fe-4S](2+) cluster] + N(6)-octanoyl-L-lysyl-[protein] + 2 oxidized [2Fe-2S]-[ferredoxin] + 2 S-adenosyl-L-methionine + 4 H(+) = [[Fe-S] cluster scaffold protein] + N(6)-[(R)-dihydrolipoyl]-L-lysyl-[protein] + 4 Fe(3+) + 2 hydrogen sulfide + 2 5'-deoxyadenosine + 2 L-methionine + 2 reduced [2Fe-2S]-[ferredoxin]. The protein operates within protein modification; protein lipoylation via endogenous pathway; protein N(6)-(lipoyl)lysine from octanoyl-[acyl-carrier-protein]: step 2/2. Functionally, catalyzes the radical-mediated insertion of two sulfur atoms into the C-6 and C-8 positions of the octanoyl moiety bound to the lipoyl domains of lipoate-dependent enzymes, thereby converting the octanoylated domains into lipoylated derivatives. This Oryza sativa subsp. indica (Rice) protein is Lipoyl synthase, mitochondrial.